The sequence spans 690 residues: Protein MODIFIED TRANSPORT TO THE VACUOLE 1 (690 aa).

Positions 20–150 (VTSDEDKVAP…PESINRRIEG (131 aa)) constitute a VHS domain. Disordered regions lie at residues 228 to 258 (DGNY…SVRV) and 518 to 551 (FSID…HQAP). The span at 243 to 257 (GHASGEASESSASVR) shows a compositional bias: low complexity. The span at 520 to 536 (IDENNSNQKGSSSSTLP) shows a compositional bias: polar residues.

In terms of assembly, binds to clathrin heavy chain. As to expression, expressed in inflorescence stems, stigmas, roots, roots meristems, embryos, and floral and leaf vasculatures, but absent from the floral abscission zone.

The protein resides in the golgi apparatus. It localises to the trans-Golgi network. It is found in the cytoplasmic vesicle. Its subcellular location is the clathrin-coated vesicle. Functionally, mediates clathrin-dependent trafficking of vacuolar cargo from the trans-Golgi network (TGN). Promotes plant growth. This is Protein MODIFIED TRANSPORT TO THE VACUOLE 1 from Arabidopsis thaliana (Mouse-ear cress).